The following is a 755-amino-acid chain: Beta-galactosidase (755 aa).

E382 functions as the Proton donor in the catalytic mechanism. E463 (nucleophile) is an active-site residue.

The protein belongs to the glycosyl hydrolase 2 family.

The catalysed reaction is Hydrolysis of terminal non-reducing beta-D-galactose residues in beta-D-galactosides.. This is Beta-galactosidase (lacZ) from Rhizobium meliloti (Ensifer meliloti).